Consider the following 219-residue polypeptide: UPF0502 protein Swoo_2055 (219 aa).

Residues 167-195 (QVKGESVPISEHSRSQREAPSKRQDEMDE) are disordered. Residues 177–191 (EHSRSQREAPSKRQD) show a composition bias toward basic and acidic residues.

Belongs to the UPF0502 family.

The protein is UPF0502 protein Swoo_2055 of Shewanella woodyi (strain ATCC 51908 / MS32).